The chain runs to 90 residues: [Phe8]-phyllolitorin (90 aa).

The first 30 residues, Met-1–Cys-30, serve as a signal peptide directing secretion. The propeptide occupies Lys-31–Arg-48. Gln-49 is subject to Pyrrolidone carboxylic acid. At Met-57 the chain carries Methionine amide. Positions Ser-61 to Asp-90 are excised as a propeptide.

It belongs to the bombesin/neuromedin-B/ranatensin family. In terms of tissue distribution, expressed by the skin glands.

Its subcellular location is the secreted. The chain is [Phe8]-phyllolitorin from Phyllomedusa sauvagei (Sauvage's leaf frog).